Consider the following 272-residue polypeptide: NADPH-dependent 7-cyano-7-deazaguanine reductase (272 aa).

Substrate is bound at residue 80–82 (VES). 82–83 (SK) contacts NADPH. The active-site Thioimide intermediate is the Cys-178. Asp-185 acts as the Proton donor in catalysis. 217–218 (AE) is a substrate binding site. 246 to 247 (RG) is an NADPH binding site.

Belongs to the GTP cyclohydrolase I family. QueF type 2 subfamily. In terms of assembly, homodimer.

Its subcellular location is the cytoplasm. It catalyses the reaction 7-aminomethyl-7-carbaguanine + 2 NADP(+) = 7-cyano-7-deazaguanine + 2 NADPH + 3 H(+). It functions in the pathway tRNA modification; tRNA-queuosine biosynthesis. In terms of biological role, catalyzes the NADPH-dependent reduction of 7-cyano-7-deazaguanine (preQ0) to 7-aminomethyl-7-deazaguanine (preQ1). The chain is NADPH-dependent 7-cyano-7-deazaguanine reductase from Rickettsia typhi (strain ATCC VR-144 / Wilmington).